The sequence spans 430 residues: SH3 domain-containing protein PJ696.02 (430 aa).

Residues 237–372 are disordered; sequence EPEDIWGPSS…KPKFKQDSLG (136 aa). Basic and acidic residues predominate over residues 263–277; it reads RRGDSYRSNRSRAHD. The residue at position 285 (Ser285) is a Phosphoserine. The segment covering 304–313 has biased composition (basic and acidic residues); the sequence is SKMDNRRSKY. Thr316 is modified (phosphothreonine). Phosphoserine occurs at positions 318 and 324. Tyr325 carries the post-translational modification Phosphotyrosine. Ser326, Ser354, and Ser406 each carry phosphoserine. The span at 333–358 shows a compositional bias: low complexity; that stretch reads VYSSDVSTESSSQFSSRSSEYSKPSR. Residues 371-430 enclose the SH3 domain; it reads LGPNQARAMYSFAGEQPGDLSFQKGDIIDIVERSGSHDDWWTGRIGYREGIFPANYVKLS.

The protein belongs to the SH3YL1 family.

This is SH3 domain-containing protein PJ696.02 from Schizosaccharomyces pombe (strain 972 / ATCC 24843) (Fission yeast).